A 322-amino-acid polypeptide reads, in one-letter code: Allergen Asp f 4 (322 aa).

An N-terminal signal peptide occupies residues 1–20 (MQLKNSMLLLTALAAGSSVA). Positions 80-105 (AAAAAASTPEPSSSHSDSSSSSGVSA) are enriched in low complexity. Residues 80-109 (AAAAAASTPEPSSSHSDSSSSSGVSADWTN) form a disordered region.

It localises to the secreted. The protein is Allergen Asp f 4 of Aspergillus fumigatus (strain ATCC MYA-4609 / CBS 101355 / FGSC A1100 / Af293) (Neosartorya fumigata).